A 226-amino-acid polypeptide reads, in one-letter code: ATP synthase subunit a (226 aa).

5 consecutive transmembrane segments (helical) span residues leucine 18–leucine 38, phenylalanine 74–phenylalanine 94, leucine 100–isoleucine 120, leucine 162–methionine 182, and isoleucine 187–alanine 207.

This sequence belongs to the ATPase A chain family. F-type ATPases have 2 components, CF(1) - the catalytic core - and CF(0) - the membrane proton channel. CF(1) has five subunits: alpha(3), beta(3), gamma(1), delta(1), epsilon(1). CF(0) has three main subunits: a, b and c.

The protein localises to the mitochondrion inner membrane. In terms of biological role, mitochondrial membrane ATP synthase (F(1)F(0) ATP synthase or Complex V) produces ATP from ADP in the presence of a proton gradient across the membrane which is generated by electron transport complexes of the respiratory chain. F-type ATPases consist of two structural domains, F(1) - containing the extramembraneous catalytic core and F(0) - containing the membrane proton channel, linked together by a central stalk and a peripheral stalk. During catalysis, ATP synthesis in the catalytic domain of F(1) is coupled via a rotary mechanism of the central stalk subunits to proton translocation. Key component of the proton channel; it may play a direct role in the translocation of protons across the membrane. The protein is ATP synthase subunit a of Aedes aegypti (Yellowfever mosquito).